The primary structure comprises 921 residues: Retinoblastoma-associated protein (921 aa).

Disordered stretches follow at residues 1-31 (MPPKPLRRAGAARSQRTSPEGGAGTASPPGG) and 603-634 (RSPKKKASGHPQSGTSNPDAQPSATSQTQKPQ). Residues 612–634 (HPQSGTSNPDAQPSATSQTQKPQ) show a composition bias toward polar residues. The Bipartite nuclear localization signal motif lies at 853 to 869 (KRSAEPSDAPKPLKRLR). The interval 873-921 (EGQDEADGGKHLPQESKFQQKLAEMTSTRTRMQKQKLNDGNDTSANEEK) is disordered. The span at 910-921 (NDGNDTSANEEK) shows a compositional bias: polar residues.

This sequence belongs to the retinoblastoma protein (RB) family. As to quaternary structure, interacts with and sequesters the E2F1 transcription factor, thereby inhibiting E2F1 transcription. Interacts with SUV39H1, KMT5B and KMT5C. (Microbial infection) Interacts with, and is inhibited by fowl adenovirus 1 protein GAM-1. Phosphorylated in G1, thereby releasing E2F1 which is then able to activate cell growth. Dephosphorylated at the late M phase. Phosphorylation of domain C promotes interaction between the C-terminal domain C and the Pocket domain, and thereby inhibits interactions with heterodimeric E2F/DP transcription factor complexes.

Its subcellular location is the nucleus. It localises to the cytoplasm. Functionally, tumor suppressor that is a key regulator of the G1/S transition of the cell cycle. The hypophosphorylated form binds transcription regulators of the E2F family, preventing transcription of E2F-responsive genes. Both physically blocks E2Fs transactivating domain and recruits chromatin-modifying enzymes that actively repress transcription. Cyclin and CDK-dependent phosphorylation of RB1 induces its dissociation from E2Fs, thereby activating transcription of E2F responsive genes and triggering entry into S phase. RB1 also promotes the G0-G1 transition upon phosphorylation and activation by CDK3/cyclin-C. This Gallus gallus (Chicken) protein is Retinoblastoma-associated protein (RB1).